The sequence spans 1603 residues: Vitellogenin-3 (1603 aa).

Positions 1–15 are cleaved as a signal peptide; it reads MKSIIIASLVALAIA. Positions 24–685 constitute a Vitellogenin domain; it reads FSPKSEYVYK…EKNAFLPKEV (662 aa). A glycan (N-linked (GlcNAc...) asparagine) is linked at asparagine 1266. Residues 1306 to 1475 form the VWFD domain; sequence ATCKVGQSEV…SYLLKNEECE (170 aa). Intrachain disulfides connect cysteine 1308–cysteine 1438 and cysteine 1330–cysteine 1474.

In terms of tissue distribution, expressed in the intestine of adult hermaphrodites.

Its subcellular location is the secreted. In terms of biological role, precursor of the egg-yolk proteins that are sources of nutrients during embryonic development. Together with other vitellogenins, may play a role in modulating life-span, acting via induction of autophagy and lysosomal lipolysis. This Caenorhabditis elegans protein is Vitellogenin-3 (vit-3).